Consider the following 641-residue polypeptide: Chaperone protein DnaK (641 aa).

Thr200 is subject to Phosphothreonine; by autocatalysis. Residues 606 to 623 (AEQGGNADAASGNAQASK) are compositionally biased toward low complexity. The segment at 606-627 (AEQGGNADAASGNAQASKAADD) is disordered.

This sequence belongs to the heat shock protein 70 family.

Its function is as follows. Acts as a chaperone. This chain is Chaperone protein DnaK, found in Xanthomonas euvesicatoria pv. vesicatoria (strain 85-10) (Xanthomonas campestris pv. vesicatoria).